A 153-amino-acid chain; its full sequence is SsrA-binding protein (153 aa).

Belongs to the SmpB family.

It is found in the cytoplasm. In terms of biological role, required for rescue of stalled ribosomes mediated by trans-translation. Binds to transfer-messenger RNA (tmRNA), required for stable association of tmRNA with ribosomes. tmRNA and SmpB together mimic tRNA shape, replacing the anticodon stem-loop with SmpB. tmRNA is encoded by the ssrA gene; the 2 termini fold to resemble tRNA(Ala) and it encodes a 'tag peptide', a short internal open reading frame. During trans-translation Ala-aminoacylated tmRNA acts like a tRNA, entering the A-site of stalled ribosomes, displacing the stalled mRNA. The ribosome then switches to translate the ORF on the tmRNA; the nascent peptide is terminated with the 'tag peptide' encoded by the tmRNA and targeted for degradation. The ribosome is freed to recommence translation, which seems to be the essential function of trans-translation. The polypeptide is SsrA-binding protein (Macrococcus caseolyticus (strain JCSC5402) (Macrococcoides caseolyticum)).